The chain runs to 372 residues: Flap endonuclease 1 (372 aa).

The tract at residues 1 to 105 (MGVKGLNQLI…GELEKRLLRR (105 aa)) is N-domain. Aspartate 34 contacts Mg(2+). The DNA site is built by arginine 47 and arginine 71. Residues aspartate 87, glutamate 159, glutamate 161, aspartate 180, and aspartate 182 each coordinate Mg(2+). Positions 123–254 (EVLKFEKRLV…ATAFKLIKEH (132 aa)) are I-domain. Glutamate 159 contributes to the DNA binding site. DNA-binding residues include glycine 232 and aspartate 234. Aspartate 234 contributes to the Mg(2+) binding site. An interaction with PCNA region spans residues 339-347 (VQGRLDGFF).

It belongs to the XPG/RAD2 endonuclease family. FEN1 subfamily. In terms of assembly, interacts with PCNA. Three molecules of RAD27 bind to one PCNA trimer with each molecule binding to one PCNA monomer. PCNA stimulates the nuclease activity without altering cleavage specificity. It depends on Mg(2+) as a cofactor. Phosphorylated. Phosphorylation upon DNA damage induces relocalization to the nuclear plasma.

The protein resides in the nucleus. Its subcellular location is the nucleolus. It localises to the nucleoplasm. It is found in the mitochondrion. Structure-specific nuclease with 5'-flap endonuclease and 5'-3' exonuclease activities involved in DNA replication and repair. During DNA replication, cleaves the 5'-overhanging flap structure that is generated by displacement synthesis when DNA polymerase encounters the 5'-end of a downstream Okazaki fragment. It enters the flap from the 5'-end and then tracks to cleave the flap base, leaving a nick for ligation. Also involved in the long patch base excision repair (LP-BER) pathway, by cleaving within the apurinic/apyrimidinic (AP) site-terminated flap. Acts as a genome stabilization factor that prevents flaps from equilibrating into structures that lead to duplications and deletions. Also possesses 5'-3' exonuclease activity on nicked or gapped double-stranded DNA, and exhibits RNase H activity. Also involved in replication and repair of rDNA and in repairing mitochondrial DNA. The chain is Flap endonuclease 1 from Candida dubliniensis (strain CD36 / ATCC MYA-646 / CBS 7987 / NCPF 3949 / NRRL Y-17841) (Yeast).